Reading from the N-terminus, the 245-residue chain is uncharacterized protein (245 aa).

The first 19 residues, 1 to 19, serve as a signal peptide directing secretion; sequence MKLTQFISYAILSLSGVQA.

Its subcellular location is the secreted. This is an uncharacterized protein from Arthroderma benhamiae (strain ATCC MYA-4681 / CBS 112371) (Trichophyton mentagrophytes).